A 276-amino-acid polypeptide reads, in one-letter code: Secretagogin (276 aa).

6 consecutive EF-hand domains span residues 12-47, 71-93, 105-140, 149-184, 197-232, and 240-276; these read LDAA…MLTK, DVSK…EDEN, DSSV…LFLH, KLEE…QENF, ERKR…MMEL, and VDLD…KINP. Residues D71, S73, D75, C77, E82, D118, D120, S122, E129, D162, N164, D166, R168, D173, D210, S212, T214, E221, D254, N256, D258, K260, and E265 each coordinate Ca(2+).

It is found in the cytoplasm. Its subcellular location is the secreted. The protein resides in the cytoplasmic vesicle. The protein localises to the secretory vesicle membrane. In Bos taurus (Bovine), this protein is Secretagogin (SCGN).